A 469-amino-acid chain; its full sequence is Aspartyl/glutamyl-tRNA(Asn/Gln) amidotransferase subunit B (469 aa).

Belongs to the GatB/GatE family. GatB subfamily. In terms of assembly, heterotrimer of A, B and C subunits.

It catalyses the reaction L-glutamyl-tRNA(Gln) + L-glutamine + ATP + H2O = L-glutaminyl-tRNA(Gln) + L-glutamate + ADP + phosphate + H(+). The enzyme catalyses L-aspartyl-tRNA(Asn) + L-glutamine + ATP + H2O = L-asparaginyl-tRNA(Asn) + L-glutamate + ADP + phosphate + 2 H(+). Allows the formation of correctly charged Asn-tRNA(Asn) or Gln-tRNA(Gln) through the transamidation of misacylated Asp-tRNA(Asn) or Glu-tRNA(Gln) in organisms which lack either or both of asparaginyl-tRNA or glutaminyl-tRNA synthetases. The reaction takes place in the presence of glutamine and ATP through an activated phospho-Asp-tRNA(Asn) or phospho-Glu-tRNA(Gln). The polypeptide is Aspartyl/glutamyl-tRNA(Asn/Gln) amidotransferase subunit B (Methanococcus maripaludis (strain DSM 14266 / JCM 13030 / NBRC 101832 / S2 / LL)).